A 631-amino-acid chain; its full sequence is Bromodomain-containing protein 9 (631 aa).

2 disordered regions span residues 1 to 26 (MGKK…PLEK) and 39 to 116 (VTEL…TLPK). 2 stretches are compositionally biased toward basic and acidic residues: residues 9–26 (RPEW…PLEK) and 50–63 (SYYD…WERH). A compositionally biased stretch (basic residues) spans 64–73 (KEKKKKKKKK). Basic and acidic residues predominate over residues 74–85 (SEKEKYADDDER). A compositionally biased stretch (basic residues) spans 86–96 (RRRKEEKKKKR). Residues 166 to 270 (NEATPHQQLL…HTGFKMMSKQ (105 aa)) enclose the Bromo domain. A histone H4K5ac H4K8ac and histone H4K5bu H4K8bu binding region spans residues 244–246 (VYN). Positions 571–631 (ASVDRVGSRP…SPEPGSTANS (61 aa)) are disordered. Residues 581-590 (SSNLSSLSNA) show a composition bias toward low complexity.

In terms of assembly, binds acetylated histones H3 and H4. Binds butyrylated histone H4.

Its subcellular location is the nucleus. Functionally, plays a role in chromatin remodeling and regulation of transcription. Acts as a chromatin reader that recognizes and binds acylated histones: binds histones that are acetylated and/or butyrylated. The polypeptide is Bromodomain-containing protein 9 (brd9) (Danio rerio (Zebrafish)).